The chain runs to 367 residues: D-alanine--D-alanine ligase (367 aa).

Residues 148–357 (KMAFEQAGLP…FPELVDKLVQ (210 aa)) form the ATP-grasp domain. 184-239 (EASLGYPCFVKPANLGSSVGISKVRSRQELEDALDNAANYDRRIIVEAGVVAREVE) serves as a coordination point for ATP. Asp-310, Glu-324, and Asn-326 together coordinate Mg(2+).

Belongs to the D-alanine--D-alanine ligase family. Requires Mg(2+) as cofactor. Mn(2+) serves as cofactor.

The protein resides in the cytoplasm. It catalyses the reaction 2 D-alanine + ATP = D-alanyl-D-alanine + ADP + phosphate + H(+). The protein operates within cell wall biogenesis; peptidoglycan biosynthesis. In terms of biological role, cell wall formation. The polypeptide is D-alanine--D-alanine ligase (Trichormus variabilis (strain ATCC 29413 / PCC 7937) (Anabaena variabilis)).